A 430-amino-acid polypeptide reads, in one-letter code: Enolase (430 aa).

A (2R)-2-phosphoglycerate-binding site is contributed by Q165. Residue E207 is the Proton donor of the active site. D244, E287, and D314 together coordinate Mg(2+). The (2R)-2-phosphoglycerate site is built by K339, R368, S369, and K390. Catalysis depends on K339, which acts as the Proton acceptor.

This sequence belongs to the enolase family. Component of the RNA degradosome, a multiprotein complex involved in RNA processing and mRNA degradation. It depends on Mg(2+) as a cofactor.

It is found in the cytoplasm. The protein resides in the secreted. It localises to the cell surface. The catalysed reaction is (2R)-2-phosphoglycerate = phosphoenolpyruvate + H2O. It participates in carbohydrate degradation; glycolysis; pyruvate from D-glyceraldehyde 3-phosphate: step 4/5. Its function is as follows. Catalyzes the reversible conversion of 2-phosphoglycerate (2-PG) into phosphoenolpyruvate (PEP). It is essential for the degradation of carbohydrates via glycolysis. In Xylella fastidiosa (strain 9a5c), this protein is Enolase.